The primary structure comprises 356 residues: Tyrosine recombinase XerS (356 aa).

One can recognise a Core-binding (CB) domain in the interval 16 to 121; the sequence is VMPWYVLDYY…ALSSLYKYLT (106 aa). In terms of domain architecture, Tyr recombinase spans 169-354; it reads AFLDYVDKEY…VNDEQKNALD (186 aa). Catalysis depends on residues Arg-210, Lys-234, His-306, Arg-309, and His-332. Catalysis depends on Tyr-341, which acts as the O-(3'-phospho-DNA)-tyrosine intermediate.

The protein belongs to the 'phage' integrase family. XerS subfamily.

The protein localises to the cytoplasm. Its activity is regulated as follows. FtsK is required for recombination. Site-specific tyrosine recombinase, which acts by catalyzing the cutting and rejoining of the recombining DNA molecules. Essential to convert dimers of the bacterial chromosome into monomers to permit their segregation at cell division. This is Tyrosine recombinase XerS from Streptococcus pyogenes serotype M28 (strain MGAS6180).